Consider the following 372-residue polypeptide: Anhydro-N-acetylmuramic acid kinase (372 aa).

Gly14–Asp21 serves as a coordination point for ATP.

This sequence belongs to the anhydro-N-acetylmuramic acid kinase family.

It catalyses the reaction 1,6-anhydro-N-acetyl-beta-muramate + ATP + H2O = N-acetyl-D-muramate 6-phosphate + ADP + H(+). The protein operates within amino-sugar metabolism; 1,6-anhydro-N-acetylmuramate degradation. It functions in the pathway cell wall biogenesis; peptidoglycan recycling. In terms of biological role, catalyzes the specific phosphorylation of 1,6-anhydro-N-acetylmuramic acid (anhMurNAc) with the simultaneous cleavage of the 1,6-anhydro ring, generating MurNAc-6-P. Is required for the utilization of anhMurNAc either imported from the medium or derived from its own cell wall murein, and thus plays a role in cell wall recycling. This Photorhabdus laumondii subsp. laumondii (strain DSM 15139 / CIP 105565 / TT01) (Photorhabdus luminescens subsp. laumondii) protein is Anhydro-N-acetylmuramic acid kinase.